The chain runs to 348 residues: MGAKGITYKDAGVDIDAGNTFVKMIKPFVRATSRPEVISDIGGFGGLFSLNTNKYKNPVLVSGTDGVGTKLKIAMMADRHDTVGIDLVAMCVNDIVVQGAEPLFFLDYFATGSLSPERGAAVVKGISEGCIQAGCALIGGETAEMPGFYQDGEYDLAGFTVGVVDRDKIIDGSSITVGNTLIGLASSGLHSNGYSLARKIIFDTLGFGINDMLPGHDRSVADELLTPTRIYVKSVLNLLRDFRVNGIAHITGGGLLENVPRILPKGCKAIIRRDSWTMPEIFRILQNGGNMEWTEMYRTFNCGIGMVLAVPENDVDEVLIRLSGLQEKAFVIGEVAKCEAGTESVEMI.

The protein belongs to the AIR synthase family.

Its subcellular location is the cytoplasm. It catalyses the reaction 2-formamido-N(1)-(5-O-phospho-beta-D-ribosyl)acetamidine + ATP = 5-amino-1-(5-phospho-beta-D-ribosyl)imidazole + ADP + phosphate + H(+). Its pathway is purine metabolism; IMP biosynthesis via de novo pathway; 5-amino-1-(5-phospho-D-ribosyl)imidazole from N(2)-formyl-N(1)-(5-phospho-D-ribosyl)glycinamide: step 2/2. The protein is Phosphoribosylformylglycinamidine cyclo-ligase of Geobacter metallireducens (strain ATCC 53774 / DSM 7210 / GS-15).